The primary structure comprises 350 residues: MSKNKLSKGQQRRVNANHQRRLKTSAEKADYDDNLFGEPAEGIVISRFGMHADVESADGEVHRCNIRRTIRSLVTGDRVVWRPGKAAAEGVNVKGIVEAVHERTSVLTRPDFYDGVKPIAANIDQIVIVSAILPELSLNIIDRYLVGCETLQVEPLIVLNKIDLLDDEGMDFVNEQMDIYRNIGYRVLMVSSHTQDGLKPLEEALTGRISIFAGQSGVGKSSLLNALLGLQNEILTNDVSNVSGLGQHTTTAARLYHFPHGGDVIDSPGVREFGLWHLEPEQITQGFVEFHDYLGHCKYRDCKHDADPGCAIREAVENGAIAETRFENYHRILESMAQVKTRKNFSDTDD.

Polar residues predominate over residues 1–17; that stretch reads MSKNKLSKGQQRRVNAN. Positions 1–27 are disordered; it reads MSKNKLSKGQQRRVNANHQRRLKTSAE. The CP-type G domain maps to 104 to 273; the sequence is TSVLTRPDFY…VIDSPGVREF (170 aa). Residues 160-163 and 214-222 contribute to the GTP site; these read NKID and GQSGVGKSS. Zn(2+)-binding residues include cysteine 297, cysteine 302, histidine 304, and cysteine 310.

It belongs to the TRAFAC class YlqF/YawG GTPase family. RsgA subfamily. Monomer. Associates with 30S ribosomal subunit, binds 16S rRNA. Requires Zn(2+) as cofactor.

The protein localises to the cytoplasm. Functionally, one of several proteins that assist in the late maturation steps of the functional core of the 30S ribosomal subunit. Helps release RbfA from mature subunits. May play a role in the assembly of ribosomal proteins into the subunit. Circularly permuted GTPase that catalyzes slow GTP hydrolysis, GTPase activity is stimulated by the 30S ribosomal subunit. The polypeptide is Small ribosomal subunit biogenesis GTPase RsgA (Salmonella agona (strain SL483)).